The following is a 347-amino-acid chain: Protein RecA (347 aa).

65–72 (GPESSGKT) lines the ATP pocket. A disordered region spans residues 325 to 347 (KLGISDGDVEETEDAPKSLFDEE). Residues 338-347 (DAPKSLFDEE) show a composition bias toward basic and acidic residues.

It belongs to the RecA family.

It localises to the cytoplasm. Its function is as follows. Can catalyze the hydrolysis of ATP in the presence of single-stranded DNA, the ATP-dependent uptake of single-stranded DNA by duplex DNA, and the ATP-dependent hybridization of homologous single-stranded DNAs. It interacts with LexA causing its activation and leading to its autocatalytic cleavage. This chain is Protein RecA, found in Staphylococcus aureus (strain Mu3 / ATCC 700698).